A 424-amino-acid polypeptide reads, in one-letter code: Glutamate-1-semialdehyde 2,1-aminomutase (424 aa).

At lysine 266 the chain carries N6-(pyridoxal phosphate)lysine.

Belongs to the class-III pyridoxal-phosphate-dependent aminotransferase family. HemL subfamily. Homodimer. The cofactor is pyridoxal 5'-phosphate.

The protein localises to the cytoplasm. The enzyme catalyses (S)-4-amino-5-oxopentanoate = 5-aminolevulinate. It participates in porphyrin-containing compound metabolism; protoporphyrin-IX biosynthesis; 5-aminolevulinate from L-glutamyl-tRNA(Glu): step 2/2. The protein is Glutamate-1-semialdehyde 2,1-aminomutase of Azoarcus sp. (strain BH72).